A 158-amino-acid polypeptide reads, in one-letter code: Small ribosomal subunit protein uS7 (158 aa).

Belongs to the universal ribosomal protein uS7 family. In terms of assembly, part of the 30S ribosomal subunit. Contacts proteins S9 and S11.

Its function is as follows. One of the primary rRNA binding proteins, it binds directly to 16S rRNA where it nucleates assembly of the head domain of the 30S subunit. Is located at the subunit interface close to the decoding center, probably blocks exit of the E-site tRNA. This is Small ribosomal subunit protein uS7 from Gluconacetobacter diazotrophicus (strain ATCC 49037 / DSM 5601 / CCUG 37298 / CIP 103539 / LMG 7603 / PAl5).